A 308-amino-acid polypeptide reads, in one-letter code: Taste receptor type 2 member 43 (308 aa).

Position 1 (methionine 1) is a topological domain, extracellular. The chain crosses the membrane as a helical span at residues 2–22 (ITFLPIIFSILVVVTFVIGNC). Over 23-46 (ANGFIALVNSTEWVKRQKISFADQ) the chain is Cytoplasmic. The chain crosses the membrane as a helical span at residues 47 to 67 (ILTALAVSRVGLLWVLLLNWY). Residues 68–86 (ATVLNPAFYSVEVRTIVYN) lie on the Extracellular side of the membrane. Residues 87–107 (LWAVINHFSNWLATSLSIFYL) form a helical membrane-spanning segment. Topologically, residues 108–126 (LKIANFSNLIFLHLKRRVK) are cytoplasmic. A helical transmembrane segment spans residues 127 to 147 (SVVLVILLGPLLFLVCHLFVV). Topologically, residues 148–178 (NMNEIVRTKEYEGNMTWKSKLRSAMYLSNTT) are extracellular. N-linked (GlcNAc...) asparagine glycans are attached at residues asparagine 161 and asparagine 176. The helical transmembrane segment at 179–199 (VTILANLVPFILTLISFLLLI) threads the bilayer. At 200-229 (CSLCKHLKKMQLRDKGSQDPSTKVHIKALQ) the chain is on the cytoplasmic side. Residues 230–249 (TVISLLLCVIYFLSIMISSW) form a helical membrane-spanning segment. Residues 250-258 (SLGRVENKA) lie on the Extracellular side of the membrane. The helical transmembrane segment at 259–279 (VFMFCKAIRFSYPSAHAFILI) threads the bilayer. Residues 280–308 (WGNKKLKQTLLSVLWNVRYCVKGQKLPSP) are Cytoplasmic-facing.

Belongs to the G-protein coupled receptor T2R family.

Its subcellular location is the membrane. It is found in the cell projection. The protein localises to the cilium membrane. Functionally, gustducin-coupled receptor immplicated in the perception of bitter compounds in the oral cavity and the gastrointestinal tract. Signals through PLCB2 and the calcium-regulated cation channel TRPM5. Activated by the sulfonyl amide sweeteners saccharin and acesulfame K. In airway epithelial cells, binding of bitter compounds increases the intracellular calcium ion concentration and stimulates ciliary beat frequency. May act as chemosensory receptors in airway epithelial cells to detect and eliminate potential noxious agents from the airways. The sequence is that of Taste receptor type 2 member 43 (TAS2R43) from Papio hamadryas (Hamadryas baboon).